Reading from the N-terminus, the 508-residue chain is Photosystem II CP47 reaction center protein (508 aa).

A run of 6 helical transmembrane segments spans residues 21–36, 101–115, 140–156, 203–218, 237–252, and 457–472; these read AVHI…WAGS, IVFS…IWHW, GIHL…FGAF, IAAG…FHLS, VLSS…AFVV, and TFAL…HGAR.

Belongs to the PsbB/PsbC family. PsbB subfamily. In terms of assembly, PSII is composed of 1 copy each of membrane proteins PsbA, PsbB, PsbC, PsbD, PsbE, PsbF, PsbH, PsbI, PsbJ, PsbK, PsbL, PsbM, PsbT, PsbX, PsbY, PsbZ, Psb30/Ycf12, at least 3 peripheral proteins of the oxygen-evolving complex and a large number of cofactors. It forms dimeric complexes. The cofactor is Binds multiple chlorophylls. PSII binds additional chlorophylls, carotenoids and specific lipids..

Its subcellular location is the plastid. The protein resides in the chloroplast thylakoid membrane. In terms of biological role, one of the components of the core complex of photosystem II (PSII). It binds chlorophyll and helps catalyze the primary light-induced photochemical processes of PSII. PSII is a light-driven water:plastoquinone oxidoreductase, using light energy to abstract electrons from H(2)O, generating O(2) and a proton gradient subsequently used for ATP formation. This chain is Photosystem II CP47 reaction center protein, found in Secale cereale (Rye).